The chain runs to 267 residues: Indole-3-glycerol phosphate synthase (267 aa).

This sequence belongs to the TrpC family.

It carries out the reaction 1-(2-carboxyphenylamino)-1-deoxy-D-ribulose 5-phosphate + H(+) = (1S,2R)-1-C-(indol-3-yl)glycerol 3-phosphate + CO2 + H2O. It participates in amino-acid biosynthesis; L-tryptophan biosynthesis; L-tryptophan from chorismate: step 4/5. This is Indole-3-glycerol phosphate synthase from Cupriavidus pinatubonensis (strain JMP 134 / LMG 1197) (Cupriavidus necator (strain JMP 134)).